The primary structure comprises 513 residues: Calcium-dependent protein kinase 24 (513 aa).

The tract at residues 1–33 is disordered; it reads MQPDPSGSGGDGNANAKAKLAPPPVTAAGGRPV. The region spanning 47–305 is the Protein kinase domain; that stretch reads YRIGKKLGQG…AHEVLCHPWI (259 aa). ATP is bound by residues 53–61 and K76; that span reads LGQGQFGTT. D171 functions as the Proton acceptor in the catalytic mechanism. The interval 311–341 is autoinhibitory domain; the sequence is APDKPIDSAVLSRLKHFSAMNKLKKMALRVI. EF-hand domains follow at residues 348–383, 384–419, 420–455, and 458–489; these read EEIG…VGSE, LTEH…MNKL, EREE…FGLD, and HLED…GNAG. Positions 361, 363, 365, 367, 372, 397, 399, 401, 403, 408, 433, 435, 437, 444, 467, 469, 471, 473, and 478 each coordinate Ca(2+).

This sequence belongs to the protein kinase superfamily. Ser/Thr protein kinase family. CDPK subfamily. As to expression, expressed in roots.

The protein localises to the cytoplasm. The catalysed reaction is L-seryl-[protein] + ATP = O-phospho-L-seryl-[protein] + ADP + H(+). The enzyme catalyses L-threonyl-[protein] + ATP = O-phospho-L-threonyl-[protein] + ADP + H(+). With respect to regulation, activated by calcium. Autophosphorylation may play an important role in the regulation of the kinase activity. May play a role in signal transduction pathways that involve calcium as a second messenger. Possesses calcium-dependent protein kinase activity in vitro. The chain is Calcium-dependent protein kinase 24 from Oryza sativa subsp. japonica (Rice).